Consider the following 767-residue polypeptide: 5-methyltetrahydropteroyltriglutamate--homocysteine methyltransferase (767 aa).

Residues 17 to 20 and Lys-117 contribute to the 5-methyltetrahydropteroyltri-L-glutamate site; that span reads RELK. L-homocysteine-binding positions include 441–443 and Glu-494; that span reads IGS. L-methionine is bound by residues 441-443 and Glu-494; that span reads IGS. Residues 525–526 and Trp-571 each bind 5-methyltetrahydropteroyltri-L-glutamate; that span reads RC. Residue Asp-609 coordinates L-homocysteine. Position 609 (Asp-609) interacts with L-methionine. Glu-615 contributes to the 5-methyltetrahydropteroyltri-L-glutamate binding site. Positions 652, 654, and 676 each coordinate Zn(2+). Catalysis depends on His-705, which acts as the Proton donor. Cys-737 contacts Zn(2+).

Belongs to the vitamin-B12 independent methionine synthase family. It depends on Zn(2+) as a cofactor.

It carries out the reaction 5-methyltetrahydropteroyltri-L-glutamate + L-homocysteine = tetrahydropteroyltri-L-glutamate + L-methionine. It functions in the pathway amino-acid biosynthesis; L-methionine biosynthesis via de novo pathway; L-methionine from L-homocysteine (MetE route): step 1/1. Catalyzes the transfer of a methyl group from 5-methyltetrahydrofolate to homocysteine resulting in methionine formation. In Bifidobacterium longum subsp. infantis (strain ATCC 15697 / DSM 20088 / JCM 1222 / NCTC 11817 / S12), this protein is 5-methyltetrahydropteroyltriglutamate--homocysteine methyltransferase.